Here is an 885-residue protein sequence, read N- to C-terminus: Dual serine/threonine and tyrosine protein kinase (885 aa).

The 255-residue stretch at 614–868 folds into the Protein kinase domain; sequence PKLGRELGRG…PLLGIVQPGL (255 aa). ATP contacts are provided by residues 620 to 628 and K643; that span reads LGRGQYGVV. The Proton acceptor role is filled by D739.

This sequence belongs to the protein kinase superfamily. Ser/Thr protein kinase family.

The protein localises to the cytoplasm. The protein resides in the cell membrane. Its subcellular location is the apical cell membrane. It is found in the basolateral cell membrane. It localises to the cell junction. It carries out the reaction L-seryl-[protein] + ATP = O-phospho-L-seryl-[protein] + ADP + H(+). The catalysed reaction is L-threonyl-[protein] + ATP = O-phospho-L-threonyl-[protein] + ADP + H(+). The enzyme catalyses L-tyrosyl-[protein] + ATP = O-phospho-L-tyrosyl-[protein] + ADP + H(+). Functionally, may act as a positive regulator of ERK phosphorylation downstream of fibroblast growth factor-receptor activation. May induce both caspase-dependent apoptosis and caspase-independent cell death. Plays a role in the embryonic development. The polypeptide is Dual serine/threonine and tyrosine protein kinase (dstyk) (Danio rerio (Zebrafish)).